Reading from the N-terminus, the 131-residue chain is Fluoride-specific ion channel FluC 1 (131 aa).

Transmembrane regions (helical) follow at residues 4-24 (ILLI…LSGW), 32-52 (FPLG…LVMY), 66-86 (ILLT…SYES), and 95-115 (LMQL…AVYL). 2 residues coordinate Na(+): Gly74 and Thr77.

It belongs to the fluoride channel Fluc/FEX (TC 1.A.43) family.

The protein localises to the cell membrane. It catalyses the reaction fluoride(in) = fluoride(out). Na(+) is not transported, but it plays an essential structural role and its presence is essential for fluoride channel function. Its function is as follows. Fluoride-specific ion channel. Important for reducing fluoride concentration in the cell, thus reducing its toxicity. In Methanosarcina acetivorans (strain ATCC 35395 / DSM 2834 / JCM 12185 / C2A), this protein is Fluoride-specific ion channel FluC 1.